The primary structure comprises 487 residues: MSFTLAIVGRPNVGKSTLFNRLVGKRLALVDDQPGVTRDLREGDARLIDLRFTVIDTAGLEEVTDDSLQGRMRRLTERAVEMADVCLFLIDGRVGVTPSDEVFADILRRKNAHVILGVNKAEGRAGDGGAIEAWSLGLGEPIRLSAEHGEGMDDLYHILRPIAEGFAERAAADAPVVDVDVPEEEADLEADPEAHKPTVKHPLQIAVIGRPNAGKSTLINKIIGEDRLLTGPEAGITRDAISVRSEWHGTPIRIFDTAGMRKKARISDKLEKLSVADGLRAVRFAEVVVVLLDVEIPFEQQDLRIADFAETEGRAVVVAVNKWDLEGEKQEKLAELKEMFERLLPQLRGAPLVTVSAKTGRGLDRLHAAILRAHDIWNRRITTARLNTWLGAMVEAHPPPAPGGRRIKLRYMTQVKTRPPGFVVMCSHPDEMPDSYRRYLVNGLRDHFDMPGTPIRLTMRGQGDKNPFKERKFRTPSRLRKHLGKKD.

EngA-type G domains are found at residues 3 to 167 (FTLA…EGFA) and 203 to 378 (LQIA…DIWN). GTP-binding positions include 9–16 (GRPNVGKS), 56–60 (DTAGL), 119–122 (NKAE), 209–216 (GRPNAGKS), 256–260 (DTAGM), and 321–324 (NKWD). The region spanning 379–463 (RRITTARLNT…PIRLTMRGQG (85 aa)) is the KH-like domain. Residues 451–487 (PGTPIRLTMRGQGDKNPFKERKFRTPSRLRKHLGKKD) are disordered. Over residues 471-487 (RKFRTPSRLRKHLGKKD) the composition is skewed to basic residues.

The protein belongs to the TRAFAC class TrmE-Era-EngA-EngB-Septin-like GTPase superfamily. EngA (Der) GTPase family. In terms of assembly, associates with the 50S ribosomal subunit.

Its function is as follows. GTPase that plays an essential role in the late steps of ribosome biogenesis. This chain is GTPase Der, found in Cereibacter sphaeroides (strain ATCC 17029 / ATH 2.4.9) (Rhodobacter sphaeroides).